The chain runs to 105 residues: uncharacterized protein (105 aa).

Disordered stretches follow at residues 29-55 and 72-105; these read HTRV…TDES and EQRG…RSGR. Residues 72–81 show a composition bias toward basic and acidic residues; that stretch reads EQRGDRRAVR.

This is an uncharacterized protein from Streptomyces coelicolor (strain ATCC BAA-471 / A3(2) / M145).